The primary structure comprises 664 residues: Acetylcholinesterase (664 aa).

Residues 1 to 29 (MFVNQRTRRPYMSVFVLVLGAAVICPAYG) form the signal peptide. An intrachain disulfide couples C95 to C122. N117 carries an N-linked (GlcNAc...) asparagine glycan. Catalysis depends on S261, which acts as the Acyl-ester intermediate. Cysteines 315 and 330 form a disulfide. N316 carries an N-linked (GlcNAc...) asparagine glycan. Active-site charge relay system residues include E390 and H504. A disulfide bond links C466 and C588. Residue N517 is glycosylated (N-linked (GlcNAc...) asparagine). N647 carries the GPI-anchor amidated asparagine lipid modification. A propeptide spans 648-664 (KTPPHPQVILETRAFMH) (removed in mature form).

This sequence belongs to the type-B carboxylesterase/lipase family. As to quaternary structure, homodimer; disulfide-linked.

Its subcellular location is the synapse. It localises to the cell membrane. It carries out the reaction acetylcholine + H2O = choline + acetate + H(+). Functionally, rapidly hydrolyzes choline released into the synapse. It can hydrolyze butyrylthiocholine. This Anopheles stephensi (Indo-Pakistan malaria mosquito) protein is Acetylcholinesterase.